The following is a 235-amino-acid chain: Phosphoribosylaminoimidazole-succinocarboxamide synthase (235 aa).

Belongs to the SAICAR synthetase family.

It catalyses the reaction 5-amino-1-(5-phospho-D-ribosyl)imidazole-4-carboxylate + L-aspartate + ATP = (2S)-2-[5-amino-1-(5-phospho-beta-D-ribosyl)imidazole-4-carboxamido]succinate + ADP + phosphate + 2 H(+). It functions in the pathway purine metabolism; IMP biosynthesis via de novo pathway; 5-amino-1-(5-phospho-D-ribosyl)imidazole-4-carboxamide from 5-amino-1-(5-phospho-D-ribosyl)imidazole-4-carboxylate: step 1/2. This Streptococcus thermophilus (strain ATCC BAA-250 / LMG 18311) protein is Phosphoribosylaminoimidazole-succinocarboxamide synthase.